The sequence spans 101 residues: Small ribosomal subunit protein uS14 (101 aa).

It belongs to the universal ribosomal protein uS14 family. Part of the 30S ribosomal subunit. Contacts proteins S3 and S10.

In terms of biological role, binds 16S rRNA, required for the assembly of 30S particles and may also be responsible for determining the conformation of the 16S rRNA at the A site. The polypeptide is Small ribosomal subunit protein uS14 (Serratia proteamaculans (strain 568)).